Here is a 446-residue protein sequence, read N- to C-terminus: Bifunctional protein GlmU (446 aa).

The tract at residues 1 to 226 is pyrophosphorylase; that stretch reads MLAIAILAAG…PFEIKGINDR (226 aa). Residues 7-10, lysine 21, glutamine 73, and 78-79 contribute to the UDP-N-acetyl-alpha-D-glucosamine site; these read LAAG and GT. Aspartate 103 serves as a coordination point for Mg(2+). UDP-N-acetyl-alpha-D-glucosamine contacts are provided by glycine 140, glutamate 155, asparagine 170, and asparagine 224. Position 224 (asparagine 224) interacts with Mg(2+). The linker stretch occupies residues 227–247; that stretch reads VQLSECEHYIQEELKSLWMSK. Residues 248–446 form an N-acetyltransferase region; sequence GVSFVDPISC…SKAIIRTKAD (199 aa). Residues arginine 329 and lysine 347 each coordinate UDP-N-acetyl-alpha-D-glucosamine. The Proton acceptor role is filled by histidine 359. Residues tyrosine 362 and asparagine 373 each contribute to the UDP-N-acetyl-alpha-D-glucosamine site. Residues alanine 376, alanine 419, and arginine 436 each coordinate acetyl-CoA.

The protein in the N-terminal section; belongs to the N-acetylglucosamine-1-phosphate uridyltransferase family. It in the C-terminal section; belongs to the transferase hexapeptide repeat family. Homotrimer. It depends on Mg(2+) as a cofactor.

The protein localises to the cytoplasm. It carries out the reaction alpha-D-glucosamine 1-phosphate + acetyl-CoA = N-acetyl-alpha-D-glucosamine 1-phosphate + CoA + H(+). It catalyses the reaction N-acetyl-alpha-D-glucosamine 1-phosphate + UTP + H(+) = UDP-N-acetyl-alpha-D-glucosamine + diphosphate. It functions in the pathway nucleotide-sugar biosynthesis; UDP-N-acetyl-alpha-D-glucosamine biosynthesis; N-acetyl-alpha-D-glucosamine 1-phosphate from alpha-D-glucosamine 6-phosphate (route II): step 2/2. Its pathway is nucleotide-sugar biosynthesis; UDP-N-acetyl-alpha-D-glucosamine biosynthesis; UDP-N-acetyl-alpha-D-glucosamine from N-acetyl-alpha-D-glucosamine 1-phosphate: step 1/1. The protein operates within bacterial outer membrane biogenesis; LPS lipid A biosynthesis. Catalyzes the last two sequential reactions in the de novo biosynthetic pathway for UDP-N-acetylglucosamine (UDP-GlcNAc). The C-terminal domain catalyzes the transfer of acetyl group from acetyl coenzyme A to glucosamine-1-phosphate (GlcN-1-P) to produce N-acetylglucosamine-1-phosphate (GlcNAc-1-P), which is converted into UDP-GlcNAc by the transfer of uridine 5-monophosphate (from uridine 5-triphosphate), a reaction catalyzed by the N-terminal domain. In Prochlorococcus marinus (strain NATL2A), this protein is Bifunctional protein GlmU.